The sequence spans 122 residues: Histone H2B, gonadal (122 aa).

The segment at 1 to 31 is disordered; the sequence is MPPKPSGKGQKKAGKAKGAPRTDKKRRRKRK. The residue at position 2 (P2) is a N,N-dimethylproline. A glycan (O-linked (GlcNAc) serine) is linked at S109. A Glycyl lysine isopeptide (Lys-Gly) (interchain with G-Cter in ubiquitin) cross-link involves residue K117.

Belongs to the histone H2B family. As to quaternary structure, the nucleosome is a histone octamer containing two molecules each of H2A, H2B, H3 and H4 assembled in one H3-H4 heterotetramer and two H2A-H2B heterodimers. The octamer wraps approximately 147 bp of DNA. Post-translationally, monoubiquitination of Lys-117 gives a specific tag for epigenetic transcriptional activation and is also prerequisite for histone H3 'Lys-4' and 'Lys-79' methylation. In terms of processing, glcNAcylation at Ser-109 promotes monoubiquitination of Lys-117. It fluctuates in response to extracellular glucose, and associates with transcribed genes.

Its subcellular location is the nucleus. The protein resides in the chromosome. In terms of biological role, core component of nucleosome. Nucleosomes wrap and compact DNA into chromatin, limiting DNA accessibility to the cellular machineries which require DNA as a template. Histones thereby play a central role in transcription regulation, DNA repair, DNA replication and chromosomal stability. DNA accessibility is regulated via a complex set of post-translational modifications of histones, also called histone code, and nucleosome remodeling. The chain is Histone H2B, gonadal from Asterias rubens (Common European starfish).